Here is a 504-residue protein sequence, read N- to C-terminus: Heat shock 70 kDa protein 14 (504 aa).

This sequence belongs to the heat shock protein 70 family. Component of ribosome-associated complex (RAC).

It is found in the cytoplasm. Its subcellular location is the cytosol. Component of the ribosome-associated complex (RAC), a complex involved in folding or maintaining nascent polypeptides in a folding-competent state. This Danio rerio (Zebrafish) protein is Heat shock 70 kDa protein 14 (hspa14).